We begin with the raw amino-acid sequence, 547 residues long: MTTSTSKNAISKSSQEDLCSDTKDKGSSGGGNEANAEASKAIQGFRLVLLFVGLALSVFCLSLVCISEFISTFLFTRTYPDVFGFGRIVQSWLRPFRELRPSLIPLTTWRGSAPLTCYPRVVFSFLLESCTRSSRYGACSLRRWVFSSWDHSSAHLAPSLLLPGLCPCIVAQSVFTDRATWRWCFWINLPLGGVTAVAVFLFVRLPSPQGGATTFLGLLQKLDALGTCILMPLIICLLLALQWGGTTYAWNSWRVVLCLVLFTVLLVAWLYVQYRQGDGGALPLRIVRQRSIRSAILFTFGINGSMFIIVYYVPIWFQAVKDVTAQQSGINFLACSGSMSVAAIIAGTLVSTGEEKQHQGQWRIFNYTTLVSIATGLIWRYNPATSTAYCRAGTLVMFGFGAGSGMQMPFIAAQTVLSASDISLGSSLIILIQTMGGAVFLAVSQNLFQSKLIGLLESHPYGVEPEFILDTGASGLRSAVQHKYGTKAVETVLQAYNTALRQCFLVCIVLACLTIIADAGMEWKNVRAGKKPAKAPDAHHESKTDIK.

Residues 1–17 (MTTSTSKNAISKSSQED) show a composition bias toward polar residues. A disordered region spans residues 1 to 33 (MTTSTSKNAISKSSQEDLCSDTKDKGSSGGGNE). Transmembrane regions (helical) follow at residues 47–67 (LVLL…VCIS), 156–176 (LAPS…SVFT), 183–203 (WCFW…FLFV), 224–244 (ALGT…LQWG), 252–272 (SWRV…WLYV), 296–316 (ILFT…VPIW), 330–350 (INFL…GTLV), 360–382 (GQWR…WRYN), 392–412 (AGTL…PFIA), 422–442 (ISLG…VFLA), and 503–523 (CFLV…GMEW).

Belongs to the major facilitator superfamily. TCR/Tet family.

It is found in the cell membrane. MFS-type transporer; part of the gene cluster that mediates the biosynthesis of varicidin A, an antifungal natural product containing a cis-octahydrodecalin core. The chain is Varicidin biosynthesis cluster MFS-type transporer from Talaromyces variabilis (Penicillium variabile).